The chain runs to 336 residues: Fructose-1,6-bisphosphatase class 1 (336 aa).

Residues E90, D112, L114, and D115 each coordinate Mg(2+). Substrate contacts are provided by residues 115–118 (DGSS), N211, and K277. Residue E283 participates in Mg(2+) binding.

The protein belongs to the FBPase class 1 family. In terms of assembly, homotetramer. Mg(2+) is required as a cofactor.

It localises to the cytoplasm. It carries out the reaction beta-D-fructose 1,6-bisphosphate + H2O = beta-D-fructose 6-phosphate + phosphate. It functions in the pathway carbohydrate biosynthesis; gluconeogenesis. The sequence is that of Fructose-1,6-bisphosphatase class 1 from Pseudomonas putida (strain GB-1).